A 499-amino-acid chain; its full sequence is uncharacterized protein (499 aa).

The next 12 membrane-spanning stretches (helical) occupy residues 51–71 (LLFR…LVAF), 98–118 (IIAS…TLLM), 127–147 (LAFI…CHNF), 155–175 (LVLG…LTMI), 187–207 (YLFA…YAVL), 220–240 (WLFI…YFII), 301–321 (CLYG…YTSL), 325–345 (YMTI…SFLS), 352–372 (GIIL…LLAC), 378–398 (VLYF…GLNV), 412–432 (ATAI…AGQI), and 444–464 (LTSL…IFFL).

The protein belongs to the major facilitator superfamily. Allantoate permease family.

It is found in the golgi apparatus. The protein localises to the membrane. This is an uncharacterized protein from Schizosaccharomyces pombe (strain 972 / ATCC 24843) (Fission yeast).